The chain runs to 853 residues: DNA mismatch repair protein MutS (853 aa).

ATP is bound at residue 614 to 621; that stretch reads GPNMGGKS.

It belongs to the DNA mismatch repair MutS family.

Its function is as follows. This protein is involved in the repair of mismatches in DNA. It is possible that it carries out the mismatch recognition step. This protein has a weak ATPase activity. The sequence is that of DNA mismatch repair protein MutS from Escherichia coli (strain K12 / MC4100 / BW2952).